The chain runs to 235 residues: Large ribosomal subunit protein uL1 (235 aa).

This sequence belongs to the universal ribosomal protein uL1 family. Part of the 50S ribosomal subunit.

In terms of biological role, binds directly to 23S rRNA. The L1 stalk is quite mobile in the ribosome, and is involved in E site tRNA release. Protein L1 is also a translational repressor protein, it controls the translation of the L11 operon by binding to its mRNA. The protein is Large ribosomal subunit protein uL1 of Synechococcus sp. (strain CC9902).